A 295-amino-acid polypeptide reads, in one-letter code: Fructose-bisphosphate aldolase class 1 (295 aa).

The active-site Proton acceptor is the E176. K213 (schiff-base intermediate with dihydroxyacetone-P) is an active-site residue.

The protein belongs to the class I fructose-bisphosphate aldolase family.

It catalyses the reaction beta-D-fructose 1,6-bisphosphate = D-glyceraldehyde 3-phosphate + dihydroxyacetone phosphate. It functions in the pathway carbohydrate degradation; glycolysis; D-glyceraldehyde 3-phosphate and glycerone phosphate from D-glucose: step 4/4. This Fusobacterium nucleatum subsp. nucleatum (strain ATCC 25586 / DSM 15643 / BCRC 10681 / CIP 101130 / JCM 8532 / KCTC 2640 / LMG 13131 / VPI 4355) protein is Fructose-bisphosphate aldolase class 1.